The following is a 242-amino-acid chain: MAPK-interacting and spindle-stabilizing protein-like (242 aa).

2 disordered regions span residues 1 to 145 and 192 to 242; these read MSDE…SLGP and PPGA…HSYH. N-acetylserine is present on Ser-2. Phosphoserine is present on residues Ser-2, Ser-6, and Ser-15. A compositionally biased stretch (polar residues) spans 13–29; that stretch reads EQSSAKPPAVTNTKAGH. Positions 30–43 are enriched in low complexity; sequence SSQGWPGSSPWSNP. Pro residues-rich tracts occupy residues 44–53 and 75–114; these read SAPPAMPSGL and SMPP…PGPT. Over residues 192-210 the composition is skewed to low complexity; the sequence is PPGAWGPAAPYPGPAGSYP.

Belongs to the MISS family.

This chain is MAPK-interacting and spindle-stabilizing protein-like (Mapk1ip1l), found in Mus musculus (Mouse).